A 267-amino-acid polypeptide reads, in one-letter code: NAD(P)H-hydrate epimerase (267 aa).

The 216-residue stretch at 27-242 (AQKIDEDLMS…DLEAKFDLQL (216 aa)) folds into the YjeF N-terminal domain. 78-82 (NQGGD) contacts (6S)-NADPHX. K(+)-binding residues include Gln79 and Asp142. Residues 146–152 (GFNFKGD) and Asp185 each bind (6S)-NADPHX. Ser188 is a K(+) binding site.

Belongs to the NnrE/AIBP family. Requires K(+) as cofactor.

The protein resides in the cytoplasm. It is found in the mitochondrion. It carries out the reaction (6R)-NADHX = (6S)-NADHX. It catalyses the reaction (6R)-NADPHX = (6S)-NADPHX. In terms of biological role, catalyzes the epimerization of the S- and R-forms of NAD(P)HX, a damaged form of NAD(P)H that is a result of enzymatic or heat-dependent hydration. This is a prerequisite for the S-specific NAD(P)H-hydrate dehydratase to allow the repair of both epimers of NAD(P)HX. The sequence is that of NAD(P)H-hydrate epimerase from Mycosarcoma maydis (Corn smut fungus).